The primary structure comprises 152 residues: SsrA-binding protein (152 aa).

This sequence belongs to the SmpB family.

Its subcellular location is the cytoplasm. In terms of biological role, required for rescue of stalled ribosomes mediated by trans-translation. Binds to transfer-messenger RNA (tmRNA), required for stable association of tmRNA with ribosomes. tmRNA and SmpB together mimic tRNA shape, replacing the anticodon stem-loop with SmpB. tmRNA is encoded by the ssrA gene; the 2 termini fold to resemble tRNA(Ala) and it encodes a 'tag peptide', a short internal open reading frame. During trans-translation Ala-aminoacylated tmRNA acts like a tRNA, entering the A-site of stalled ribosomes, displacing the stalled mRNA. The ribosome then switches to translate the ORF on the tmRNA; the nascent peptide is terminated with the 'tag peptide' encoded by the tmRNA and targeted for degradation. The ribosome is freed to recommence translation, which seems to be the essential function of trans-translation. This Rickettsia peacockii (strain Rustic) protein is SsrA-binding protein.